The chain runs to 239 residues: RNA polymerase sigma-35 factor (239 aa).

Positions 1 to 27 are excised as a propeptide; it reads MMKLKFYLVYLWYKVLLKLGIKTDEIY. The Polymerase core binding motif lies at 86–99; that stretch reads DLISIGTIGLIKAV. Positions 206–225 form a DNA-binding region, H-T-H motif; that stretch reads QKDVADMLGISQSYISRLEK.

The protein belongs to the sigma-70 factor family. Proteolytically cleaved in the N-terminus probably by a SpoIIGA homolog to yield the active peptide.

Functionally, sigma factors are initiation factors that promote the attachment of RNA polymerase to specific initiation sites and are then released. This sigma factor directs the transcription of crystal protein genes, a sporulation-regulated event. The polypeptide is RNA polymerase sigma-35 factor (sigE) (Bacillus anthracis).